Consider the following 572-residue polypeptide: Flagellin B (572 aa).

The protein belongs to the bacterial flagellin family. Heteromer of flaA and flaB.

Its subcellular location is the secreted. It is found in the bacterial flagellum. Its function is as follows. Flagellin is the subunit protein which polymerizes to form the filaments of bacterial flagella. The sequence is that of Flagellin B (flaB) from Campylobacter jejuni subsp. jejuni serotype O:2 (strain ATCC 700819 / NCTC 11168).